Here is a 988-residue protein sequence, read N- to C-terminus: Protein argonaute 10 (988 aa).

The span at 1-11 shows a compositional bias: basic and acidic residues; the sequence is MPIRQMKDSSE. The tract at residues 1–103 is disordered; it reads MPIRQMKDSS…PPSQTTSSAV (103 aa). Residues 41–57 are compositionally biased toward low complexity; sequence PVTVTTPATVTQSQASS. The segment covering 64 to 73 has biased composition (basic residues); sequence NRSRRRNRGG. The PAZ domain occupies 338 to 451; the sequence is PVIEFVAQLL…LPMEACKIVE (114 aa). Residues 625-946 form the Piwi domain; the sequence is LLLAILPDNN…AAFRARFYLE (322 aa).

This sequence belongs to the argonaute family. Ago subfamily. Interacts with GATA18/HAN and KNAT1/BP. Interacts with RICE1 and RICE2 that act as cofactors. As to expression, expressed in roots, stems, leaves, developing embryo, siliques, inflorescences, provascular tissue, shoot apical meristem (SAM) and adaxial (upper) sides of lateral organ primordia. Observed in the floral meristem, the adaxial side of sepal primordia, and the provascular tissue.

Its subcellular location is the cytoplasm. In terms of biological role, involved in RNA-mediated post-transcriptional gene silencing (PTGS). Main component of the RNA-induced silencing complex (RISC) that binds to a short guide RNA such as a microRNA (miRNA) or small interfering RNA (siRNA). RISC uses the mature miRNA or siRNA as a guide for slicer-directed cleavage of homologous mRNAs to repress gene expression. Required for reliable formation of primary and axillary shoot apical meristems. Specifies leaf adaxial identity by repressing the miR165 and miR166 microRNAs in the embryonic shoot apex, in the shoot apical meristem (SAM) and leaf. Represses the microRNA miR398 which targets CCS1 chaperone mRNAs for translational inhibition. Acts as a negative regulator of AGO1 protein level. Like AGO1, is required for stem cell function and organ polarity. Unlike AGO1, is not subjected to small RNA-mediated repression itself. Essential for multiple processes in development. Coregulates, with GATA18/HAN, the shoot apical meristem (SAM) organization. The polypeptide is Protein argonaute 10 (Arabidopsis thaliana (Mouse-ear cress)).